The following is a 186-amino-acid chain: MDQLMFPLYFHYEDVLRQDLLLKLNYANVMEVPGLCKIIVVPKTAPSIKNGKLAMEISCGQKLKQRASTGKSFRSNPFLGSNKDKKGYVSDLARQSTLRGHGMSHFLVRISTVMSLLDSPLEIRERSIQFSMETEFCEFSPELEDHFEIFEHIRGFNVTIVTSANTQDETLLLWSGFLQKDEGETQ.

This sequence belongs to the universal ribosomal protein uL5 family.

It localises to the mitochondrion. The chain is Large ribosomal subunit protein uL5m (RPL5) from Solanum tuberosum (Potato).